The primary structure comprises 390 residues: GTPase Obg/CgtA (390 aa).

The Obg domain occupies 1–159 (MKFVDEAVIK…RDIRLELLLL (159 aa)). Residues 160-333 (ADVGMLGMPN…LCMKLAEFMD (174 aa)) form the OBG-type G domain. Residues 166–173 (GMPNAGKS), 191–195 (FTTLV), 213–216 (DIPG), 283–286 (NKVD), and 314–316 (SAA) contribute to the GTP site. Ser173 and Thr193 together coordinate Mg(2+).

Belongs to the TRAFAC class OBG-HflX-like GTPase superfamily. OBG GTPase family. In terms of assembly, monomer. Interacts with SpoT (AC Q9KNM2) in a yeast 2-hybrid assay. Requires Mg(2+) as cofactor.

It is found in the cytoplasm. Its function is as follows. Depletion experiments lead to gene down regulation and a dramatic increase in ppGpp levels, like those seen in the stringent response. There is no change in cell morphology in depletion experiments, but cells are very sensitive to the DNA-damaging agent hydroxyurea and are very elongated. Overexpression reduces growth and leads to elongated cells. Overexpression of proteins with C-terminal deletions of 29 or 62 amino acids showed fewer elongated cells. Functionally, an essential GTPase which binds GTP, GDP and possibly (p)ppGpp with moderate affinity, with high nucleotide exchange rates and a fairly low GTP hydrolysis rate. It may play a role in control of the cell cycle, stress response, ribosome biogenesis and in those bacteria that undergo differentiation, in morphogenesis control. GTPase activity is stimulated by 50S ribosomal subunits. The sequence is that of GTPase Obg/CgtA from Vibrio cholerae serotype O1 (strain ATCC 39315 / El Tor Inaba N16961).